Consider the following 217-residue polypeptide: Choline transport system permease protein OpuBB (217 aa).

The ABC transmembrane type-1 domain occupies 19–198 (TYEHITISLI…ILAIVIDYVL (180 aa)). The next 6 membrane-spanning stretches (helical) occupy residues 23 to 43 (ITISLIAVILGVLVAVPLGVV), 52 to 74 (GTIIGIVNIIQTLPSLAILAFFI), 84 to 101 (AIVALFFYSVLPILRNTY), 128 to 148 (LVELPLAAPVIMAGIRTSTIY), 150 to 170 (IGWATLASFIGGGGLGDYIFI), and 180 to 200 (IIGGAVPVTILAIVIDYVLAV).

This sequence belongs to the binding-protein-dependent transport system permease family. CysTW subfamily.

It localises to the cell membrane. Involved in a high affinity multicomponent binding-protein-dependent transport system for choline; probably responsible for the translocation of the substrate across the membrane. The polypeptide is Choline transport system permease protein OpuBB (opuBB) (Bacillus subtilis (strain 168)).